The primary structure comprises 445 residues: Phosphoglucosamine mutase (445 aa).

Ser-102 (phosphoserine intermediate) is an active-site residue. Positions 102, 241, 243, and 245 each coordinate Mg(2+). The residue at position 102 (Ser-102) is a Phosphoserine.

Belongs to the phosphohexose mutase family. Mg(2+) is required as a cofactor. Post-translationally, activated by phosphorylation.

It catalyses the reaction alpha-D-glucosamine 1-phosphate = D-glucosamine 6-phosphate. Catalyzes the conversion of glucosamine-6-phosphate to glucosamine-1-phosphate. The polypeptide is Phosphoglucosamine mutase (Shewanella sp. (strain ANA-3)).